The following is a 511-amino-acid chain: DnaJ homolog 1, mitochondrial (511 aa).

The transit peptide at 1 to 55 directs the protein to the mitochondrion; that stretch reads MAFQQGVLSRCSGVFRHHVGHSRHINNILYRHAIAFASIAPRIPKSSFHTSAIRN. Positions 59 to 127 constitute a J domain; it reads FKDPYDTLGL…RQQYDQFGPA (69 aa). The segment at 217 to 297 adopts a CR-type zinc-finger fold; sequence SKNVQLRFSA…CHGEGVQVNR (81 aa). 4 CXXCXGXG motif repeats span residues 230-237, 247-254, 269-276, and 285-292; these read CSTCSGTG, CSTCHGTG, CPTCNGEG, and CTKCHGEG.

It is found in the mitochondrion. Functionally, plays a role in mitochondrial biogenesis and protein folding. This chain is DnaJ homolog 1, mitochondrial (MDJ1), found in Saccharomyces cerevisiae (strain ATCC 204508 / S288c) (Baker's yeast).